Consider the following 156-residue polypeptide: Lipoprotein signal peptidase (156 aa).

2 consecutive transmembrane segments (helical) span residues 57-77 (LFLI…LFIN) and 83-103 (ILKI…IDRI). Residues D110 and D129 contribute to the active site. A helical transmembrane segment spans residues 124–144 (IFNIADVLVSLGTILLIIFII).

This sequence belongs to the peptidase A8 family.

It is found in the cell membrane. It catalyses the reaction Release of signal peptides from bacterial membrane prolipoproteins. Hydrolyzes -Xaa-Yaa-Zaa-|-(S,diacylglyceryl)Cys-, in which Xaa is hydrophobic (preferably Leu), and Yaa (Ala or Ser) and Zaa (Gly or Ala) have small, neutral side chains.. The protein operates within protein modification; lipoprotein biosynthesis (signal peptide cleavage). In terms of biological role, this protein specifically catalyzes the removal of signal peptides from prolipoproteins. This is Lipoprotein signal peptidase from Clostridium tetani (strain Massachusetts / E88).